Consider the following 1198-residue polypeptide: Regulator of G-protein signaling 3 (1198 aa).

Positions 137–256 (GAGQLRLSID…TPDKEISGWY (120 aa)) constitute a C2 domain. The PDZ domain occupies 299 to 376 (KITIPRGKDG…EIILLVWRMV (78 aa)). Arginine 448 is modified (omega-N-methylarginine). The tract at residues 669–933 (QQLAASPPDS…GAEGGLSLRV (265 aa)) is disordered. A Phosphoserine modification is found at serine 674. Residues 679 to 697 (KMFETEADEKREMALEEGK) are compositionally biased toward basic and acidic residues. The span at 739–751 (EPLSSKDSATSEG) shows a compositional bias: polar residues. Residues 753–773 (PPGPDAPPSKDVPPCQEPPPA) show a composition bias toward pro residues. Residues 877 to 906 (GDEEDAEEAEEVEEGEEGEEDEDEDTSDDN) are compositionally biased toward acidic residues. The segment covering 907-917 (YGERSEAKRSS) has biased composition (basic and acidic residues). Phosphoserine is present on residues serine 943, serine 946, serine 978, and serine 1007. Disordered stretches follow at residues 1007 to 1026 (SGAD…KSKN) and 1032 to 1056 (KNKL…ADKM). An RGS domain is found at 1073–1198 (SLEKLLVHKY…INQKKMSPPL (126 aa)).

In terms of assembly, binds EFNB1 and EFNB2. Binds the GNB1-GNG2 heterodimer. Post-translationally, phosphorylated by cyclic GMP-dependent protein kinase. ISGylated.

Its subcellular location is the cytoplasm. The protein resides in the nucleus. It is found in the cell membrane. Down-regulates signaling from heterotrimeric G-proteins by increasing the GTPase activity of the alpha subunits, thereby driving them into their inactive GDP-bound form. Down-regulates G-protein-mediated release of inositol phosphates and activation of MAP kinases. This is Regulator of G-protein signaling 3 (RGS3) from Homo sapiens (Human).